Consider the following 393-residue polypeptide: NAD(P)H-quinone oxidoreductase subunit H, chloroplastic (393 aa).

Belongs to the complex I 49 kDa subunit family. As to quaternary structure, NDH is composed of at least 16 different subunits, 5 of which are encoded in the nucleus.

Its subcellular location is the plastid. It is found in the chloroplast thylakoid membrane. It catalyses the reaction a plastoquinone + NADH + (n+1) H(+)(in) = a plastoquinol + NAD(+) + n H(+)(out). It carries out the reaction a plastoquinone + NADPH + (n+1) H(+)(in) = a plastoquinol + NADP(+) + n H(+)(out). Its function is as follows. NDH shuttles electrons from NAD(P)H:plastoquinone, via FMN and iron-sulfur (Fe-S) centers, to quinones in the photosynthetic chain and possibly in a chloroplast respiratory chain. The immediate electron acceptor for the enzyme in this species is believed to be plastoquinone. Couples the redox reaction to proton translocation, and thus conserves the redox energy in a proton gradient. In Cucumis sativus (Cucumber), this protein is NAD(P)H-quinone oxidoreductase subunit H, chloroplastic.